Here is a 55-residue protein sequence, read N- to C-terminus: MAEVAPAPAAAAPAKAPKKKAAAKPKKAGPSVGELIVKAVSASKERSGVSLAALK.

Residues 1–15 (MAEVAPAPAAAAPAK) are compositionally biased toward low complexity. The interval 1–28 (MAEVAPAPAAAAPAKAPKKKAAAKPKKA) is disordered. An N-acetylalanine modification is found at A2. The span at 16–27 (APKKKAAAKPKK) shows a compositional bias: basic residues. Residues 28–55 (AGPSVGELIVKAVSASKERSGVSLAALK) enclose the H15 domain.

Belongs to the histone H1/H5 family.

The protein resides in the nucleus. Its subcellular location is the chromosome. It is found in the secreted. In terms of biological role, histones H1 are necessary for the condensation of nucleosome chains into higher-order structures. Functionally, SAMP H1 has antibacterial activity against Gram-negative bacteria E.coli, A.salmonicida subsp salmonicida, V.anguillarum and S.typhimurium and Gram-positive bacteria B.subtilis and L.ivanovii. The polypeptide is Histone H1 (Salmo salar (Atlantic salmon)).